The following is a 575-amino-acid chain: MALFRLSAAIVVIFLYIWSPSQRIQCRCRSFERCWPSQQDWSALNNSISGHLVNPRPVAYVCHDPDFDHDACEHVRYMANNSLWRASMPGALQNTVWESSLVSTQTCLPFSAREQPCNQGRIPLYAAVVESKKEVQTAVRFARKYNLRLVIRNTGHDGAGSSSGPESFQIFTHRLNSILYHSNFCPGGSHSKYQTCAGPAVSIGAGVMFRDLYARGAERGFVVTGGDSGTVGAAGGFIQGGGVPAFMGYTWGLAVDNVLEFEVVVATGQLVIANADENADLFWALRGGGGGSFGIVVRVTMRTYPDLPTLKGELTVSGNRHDPSFWTEDIAGLLNALRAFNHLDAPGVFRLIQTSAKGSISAVLEVYLLNRTLAEDLTRMMGPILGTSRRKYNISPITVGKISSFANPNEPTITEFFGSTILSRNFFESPNGPLVMAKRMAAINLDPGDGLLTSNLGGRINNENSDLPLHPAWRSSAHLVSLVVNVDTSLRARERAMVRLTDELMPMLYAIDSSQWVSYSNMGNPNEPDFKERYWGMRNYRRLVSIKKKWDPKDLFIARVGVRSDGWDSEGMCRT.

The first 23 residues, M1–R23, serve as a signal peptide directing secretion. Residues N45 and N80 are each glycosylated (N-linked (GlcNAc...) asparagine). The 189-residue stretch at N118 to D306 folds into the FAD-binding PCMH-type domain. A Pros-8alpha-FAD histidine modification is found at H156. Residue N370 is glycosylated (N-linked (GlcNAc...) asparagine).

It belongs to the oxygen-dependent FAD-linked oxidoreductase family. FAD serves as cofactor.

It carries out the reaction peniprequinolone + A = yaequinolone E + AH2. The protein operates within secondary metabolite biosynthesis. It functions in the pathway alkaloid biosynthesis. It participates in mycotoxin biosynthesis. Its function is as follows. FAD-linked oxidoreductase; part of the gene cluster that mediates the biosynthesis of the aspoquinolone mycotoxins. Within the pathway, asqF performs FAD-dependent dehydrogenation of the dimethylallyl quinolone peniprequinolone to yield the conjugated aryl diene yaequinolone E. The first step of the pathway is catalyzed by the nonribosomal peptide synthetase asqK that condenses anthranilic acid and O-methyl-L-tyrosine to produce 4'-methoxycyclopeptin. 4'-methoxycyclopeptin is then converted to 4'-methoxydehydrocyclopeptin by the ketoglutarate-dependent dioxygenase asqJ. AsqJ also converts its first product 4'-methoxydehydrocyclopeptin to 4'-methoxycyclopenin. The following conversion of 4'-methoxycyclopenin into 4'-methoxyviridicatin is catalyzed by the cyclopenase asqI. 4'-methoxyviridicatin is the precursor of quinolone natural products, and is further converted to quinolinone B. The prenyltransferase asqH1 then catalyzes the canonical Friedel-Crafts alkylation of quinolinone B with dimethylallyl cation to yield dimethylallyl quinolone, which is subjected to FAD-dependent dehydrogenation by the FAD-linked oxidoreductase asqF to yield conjugated aryl diene. The delta(3') double bond then serves as the site of the second alkylation with DMAPP catalyzed by the prenyltransferase asqH2 to yield a carbenium ion intermediate, which can be attacked by H(2)O to yield a styrenyl quinolone containing a C3'-hydroxyprenyl chain. The FAD-dependent monooxygenase asqG performs epoxidation of the terminal C7'-C8' olefin. Finally, after dehydratation of the epoxide at C3 by asqC, the quinolone epoxide rearrangement protein asqO catalyzes an enzymatic 3-exo-tet cyclization to yield the cyclopropyl-THF ring system in aspoquinolone. The chain is FAD-linked oxidoreductase asqF from Emericella nidulans (strain FGSC A4 / ATCC 38163 / CBS 112.46 / NRRL 194 / M139) (Aspergillus nidulans).